The primary structure comprises 500 residues: Proline--tRNA ligase (500 aa).

This sequence belongs to the class-II aminoacyl-tRNA synthetase family. ProS type 3 subfamily. Homodimer.

Its subcellular location is the cytoplasm. It carries out the reaction tRNA(Pro) + L-proline + ATP = L-prolyl-tRNA(Pro) + AMP + diphosphate. Catalyzes the attachment of proline to tRNA(Pro) in a two-step reaction: proline is first activated by ATP to form Pro-AMP and then transferred to the acceptor end of tRNA(Pro). The protein is Proline--tRNA ligase of Paramagnetospirillum magneticum (strain ATCC 700264 / AMB-1) (Magnetospirillum magneticum).